The primary structure comprises 243 residues: Probable phosphatase CLD_1129 (243 aa).

9 residues coordinate Zn(2+): histidine 8, histidine 10, histidine 16, histidine 41, glutamate 74, histidine 102, histidine 132, aspartate 192, and histidine 194.

It belongs to the PHP family. Zn(2+) is required as a cofactor.

This chain is Probable phosphatase CLD_1129, found in Clostridium botulinum (strain Okra / Type B1).